We begin with the raw amino-acid sequence, 372 residues long: N-methyl-L-tryptophan oxidase (372 aa).

4-34 (DLIIIGSGSVGAAAGYYATRAGLKVLMTDAH) is an FAD binding site. Cys307 carries the S-8alpha-FAD cysteine modification.

The protein belongs to the MSOX/MTOX family. MTOX subfamily. Monomer. Requires FAD as cofactor.

It carries out the reaction N(alpha)-methyl-L-tryptophan + O2 + H2O = L-tryptophan + formaldehyde + H2O2. Catalyzes the oxidative demethylation of N-methyl-L-tryptophan. This Salmonella newport (strain SL254) protein is N-methyl-L-tryptophan oxidase.